We begin with the raw amino-acid sequence, 231 residues long: Histone H1 (231 aa).

Positions 1–17 are enriched in low complexity; the sequence is MSDPAIEVAPVPVASPA. 2 disordered regions span residues 1 to 44 and 124 to 231; these read MSDP…PVSD and TKKV…AKKA. Residues 38-112 form the H15 domain; that stretch reads THPPVSDMIV…GASGSFKLPA (75 aa). Basic residues-rich tracts occupy residues 145 to 171, 178 to 213, and 221 to 231; these read KVKKTIAKKPKVASATKIKKPVAKTTK, PTKKVAAKPKAAPKPKAAPKPKVAKPKKAAAPKAKK, and KAAKKPSAKKA.

Belongs to the histone H1/H5 family.

The protein resides in the nucleus. The protein localises to the chromosome. Its function is as follows. Histones H1 are necessary for the condensation of nucleosome chains into higher-order structures. The chain is Histone H1 from Chironomus thummi thummi (Midge).